Consider the following 345-residue polypeptide: 1-aminocyclopropane-1-carboxylate oxidase homolog 7 (345 aa).

Residue Lys-16 forms a Glycyl lysine isopeptide (Lys-Gly) (interchain with G-Cter in ubiquitin) linkage. Positions 194-293 (KGLHMICHYY…RISIACFFSS (100 aa)) constitute a Fe2OG dioxygenase domain. Fe cation is bound by residues His-218, Asp-220, and His-274. Position 284 (Arg-284) interacts with 2-oxoglutarate.

It belongs to the iron/ascorbate-dependent oxidoreductase family. Fe(2+) serves as cofactor.

The protein is 1-aminocyclopropane-1-carboxylate oxidase homolog 7 of Arabidopsis thaliana (Mouse-ear cress).